The primary structure comprises 522 residues: Lysine--tRNA ligase (522 aa).

Residues 44 to 52 (PSGLPHIGT) carry the 'HIGH' region motif. Residues 290–294 (KISKS) carry the 'KMSKS' region motif. Lys-293 provides a ligand contact to ATP.

The protein belongs to the class-I aminoacyl-tRNA synthetase family.

The protein localises to the cytoplasm. The enzyme catalyses tRNA(Lys) + L-lysine + ATP = L-lysyl-tRNA(Lys) + AMP + diphosphate. In Rickettsia massiliae (strain Mtu5), this protein is Lysine--tRNA ligase.